Consider the following 363-residue polypeptide: UDP-3-O-acylglucosamine N-acyltransferase (363 aa).

Residue His-266 is the Proton acceptor of the active site.

The protein belongs to the transferase hexapeptide repeat family. LpxD subfamily. In terms of assembly, homotrimer.

It catalyses the reaction a UDP-3-O-[(3R)-3-hydroxyacyl]-alpha-D-glucosamine + a (3R)-hydroxyacyl-[ACP] = a UDP-2-N,3-O-bis[(3R)-3-hydroxyacyl]-alpha-D-glucosamine + holo-[ACP] + H(+). It functions in the pathway bacterial outer membrane biogenesis; LPS lipid A biosynthesis. Catalyzes the N-acylation of UDP-3-O-acylglucosamine using 3-hydroxyacyl-ACP as the acyl donor. Is involved in the biosynthesis of lipid A, a phosphorylated glycolipid that anchors the lipopolysaccharide to the outer membrane of the cell. The polypeptide is UDP-3-O-acylglucosamine N-acyltransferase (Bordetella parapertussis (strain 12822 / ATCC BAA-587 / NCTC 13253)).